We begin with the raw amino-acid sequence, 146 residues long: MNKVQIGAPRTSASPGVIMKPEGSVKIAVMNGSRQVDQVVNGEWLTMKVLPEAGLPKGIHQLSDAKDASKNVHPHKHVGQVLHDDGRNVYQFSEGGIVKHSRGIFEKPPVVGKNYEIAYSRGQGKVIGEVSQEQAAKAEQKRSRSI.

This chain is Protein TraB (traB), found in Escherichia coli.